We begin with the raw amino-acid sequence, 869 residues long: DNA mismatch repair protein MutS (869 aa).

618–625 (GPNMGGKS) contributes to the ATP binding site.

It belongs to the DNA mismatch repair MutS family.

Functionally, this protein is involved in the repair of mismatches in DNA. It is possible that it carries out the mismatch recognition step. This protein has a weak ATPase activity. This Zymomonas mobilis subsp. mobilis (strain ATCC 31821 / ZM4 / CP4) protein is DNA mismatch repair protein MutS.